Reading from the N-terminus, the 313-residue chain is Ester hydrolase C11orf54 homolog (313 aa).

Residues H264, H266, and H276 each coordinate Zn(2+).

In terms of assembly, monomer. It depends on Zn(2+) as a cofactor.

Its subcellular location is the nucleus. The protein resides in the cytoplasm. Its function is as follows. Exhibits ester hydrolase activity on the substrate p-nitrophenyl acetate, in vitro. May regulate DNA damage and repair by regulating HIF1A degradation via chaperone-mediated autophagy (CMA). This chain is Ester hydrolase C11orf54 homolog, found in Xenopus tropicalis (Western clawed frog).